Reading from the N-terminus, the 283-residue chain is Probable endonuclease 4 (283 aa).

Residues His-69, His-113, Glu-148, Asp-182, His-185, His-217, Asp-230, His-232, and Glu-262 each contribute to the Zn(2+) site.

This sequence belongs to the AP endonuclease 2 family. Zn(2+) is required as a cofactor.

It catalyses the reaction Endonucleolytic cleavage to 5'-phosphooligonucleotide end-products.. Its function is as follows. Endonuclease IV plays a role in DNA repair. It cleaves phosphodiester bonds at apurinic or apyrimidinic (AP) sites, generating a 3'-hydroxyl group and a 5'-terminal sugar phosphate. This is Probable endonuclease 4 from Bifidobacterium longum (strain NCC 2705).